Consider the following 425-residue polypeptide: UDP-N-acetylglucosamine 1-carboxyvinyltransferase (425 aa).

22–23 (KN) provides a ligand contact to phosphoenolpyruvate. Residue Arg91 coordinates UDP-N-acetyl-alpha-D-glucosamine. Cys115 functions as the Proton donor in the catalytic mechanism. 2-(S-cysteinyl)pyruvic acid O-phosphothioketal is present on Cys115. UDP-N-acetyl-alpha-D-glucosamine contacts are provided by residues 120–124 (RPIDL), Asp305, and Val327.

The protein belongs to the EPSP synthase family. MurA subfamily.

The protein resides in the cytoplasm. It carries out the reaction phosphoenolpyruvate + UDP-N-acetyl-alpha-D-glucosamine = UDP-N-acetyl-3-O-(1-carboxyvinyl)-alpha-D-glucosamine + phosphate. The protein operates within cell wall biogenesis; peptidoglycan biosynthesis. Functionally, cell wall formation. Adds enolpyruvyl to UDP-N-acetylglucosamine. The sequence is that of UDP-N-acetylglucosamine 1-carboxyvinyltransferase from Coprothermobacter proteolyticus (strain ATCC 35245 / DSM 5265 / OCM 4 / BT).